The chain runs to 368 residues: Aspartate-semialdehyde dehydrogenase (368 aa).

NADP(+) is bound by residues 10 to 13, 37 to 38, and Gln74; these read RGMV and TS. Arg103 provides a ligand contact to phosphate. The Acyl-thioester intermediate role is filled by Cys136. Cys136 bears the S-cysteinyl cysteine; in inhibited form mark. Residue Gln163 participates in substrate binding. NADP(+) is bound by residues 166–167 and Pro194; that span reads SG. Glu242 contributes to the substrate binding site. Residue Lys245 participates in phosphate binding. Arg268 contributes to the substrate binding site. His275 (proton acceptor) is an active-site residue. Gln351 lines the NADP(+) pocket.

Belongs to the aspartate-semialdehyde dehydrogenase family. Homodimer.

The enzyme catalyses L-aspartate 4-semialdehyde + phosphate + NADP(+) = 4-phospho-L-aspartate + NADPH + H(+). It functions in the pathway amino-acid biosynthesis; L-lysine biosynthesis via DAP pathway; (S)-tetrahydrodipicolinate from L-aspartate: step 2/4. The protein operates within amino-acid biosynthesis; L-methionine biosynthesis via de novo pathway; L-homoserine from L-aspartate: step 2/3. Its pathway is amino-acid biosynthesis; L-threonine biosynthesis; L-threonine from L-aspartate: step 2/5. Catalyzes the NADPH-dependent formation of L-aspartate-semialdehyde (L-ASA) by the reductive dephosphorylation of L-aspartyl-4-phosphate. The polypeptide is Aspartate-semialdehyde dehydrogenase (Salmonella typhi).